The primary structure comprises 626 residues: ATP-dependent RNA helicase cyt-19, mitochondrial (626 aa).

The Q motif signature appears at 74 to 103; sequence ADLAALGVHENVVRAITHGMGYENMTEVQS. One can recognise a Helicase ATP-binding domain in the interval 106–297; it reads ISPALKGKDI…RSYIDKNNFE (192 aa). 119–126 lines the ATP pocket; sequence AKTGTGKT. The short motif at 241 to 244 is the DEAD box element; sequence DEAD. The Helicase C-terminal domain occupies 329-493; the sequence is AMLELIEKAL…CASVNAADSG (165 aa). Positions 569–626 are disordered; sequence LRVETREHSMRPMGSGPGHRRDFNSRGPRRQSDDPFENALHRAQDLDRRPTRRQQASF. The tract at residues 578-626 is RNA-binding; it reads MRPMGSGPGHRRDFNSRGPRRQSDDPFENALHRAQDLDRRPTRRQQASF. Residues 607–617 show a composition bias toward basic and acidic residues; it reads ALHRAQDLDRR.

This sequence belongs to the DEAD box helicase family.

The protein resides in the mitochondrion matrix. The catalysed reaction is ATP + H2O = ADP + phosphate + H(+). With respect to regulation, activated by exposed helices in a group I intron RNA. Functionally, acts as an RNA chaperone to resolve non-native structures formed during RNA folding to promote mitochondrial group I, but also group II, intron splicing. Functions predominantly by disrupting accessible RNA secondary structure and depends on spontaneous openings in tightly packed RNAs to gain access to RNA helices. This chain is ATP-dependent RNA helicase cyt-19, mitochondrial, found in Neurospora crassa (strain ATCC 24698 / 74-OR23-1A / CBS 708.71 / DSM 1257 / FGSC 987).